A 298-amino-acid chain; its full sequence is ATP synthase gamma chain (298 aa).

It belongs to the ATPase gamma chain family. As to quaternary structure, F-type ATPases have 2 components, CF(1) - the catalytic core - and CF(0) - the membrane proton channel. CF(1) has five subunits: alpha(3), beta(3), gamma(1), delta(1), epsilon(1). CF(0) has three main subunits: a, b and c.

It localises to the cell membrane. Functionally, produces ATP from ADP in the presence of a proton gradient across the membrane. The gamma chain is believed to be important in regulating ATPase activity and the flow of protons through the CF(0) complex. The protein is ATP synthase gamma chain of Mycobacterium leprae (strain Br4923).